The following is a 269-amino-acid chain: 4-hydroxy-tetrahydrodipicolinate reductase (269 aa).

Residues Gly-8–Met-13 and Glu-34 each bind NAD(+). Arg-35 contributes to the NADP(+) binding site. Residues Gly-98–Thr-100 and Ala-122–Tyr-125 contribute to the NAD(+) site. His-155 (proton donor/acceptor) is an active-site residue. Position 156 (His-156) interacts with (S)-2,3,4,5-tetrahydrodipicolinate. Lys-159 (proton donor) is an active-site residue. Gly-165–Thr-166 lines the (S)-2,3,4,5-tetrahydrodipicolinate pocket.

This sequence belongs to the DapB family.

Its subcellular location is the cytoplasm. It carries out the reaction (S)-2,3,4,5-tetrahydrodipicolinate + NAD(+) + H2O = (2S,4S)-4-hydroxy-2,3,4,5-tetrahydrodipicolinate + NADH + H(+). The enzyme catalyses (S)-2,3,4,5-tetrahydrodipicolinate + NADP(+) + H2O = (2S,4S)-4-hydroxy-2,3,4,5-tetrahydrodipicolinate + NADPH + H(+). It participates in amino-acid biosynthesis; L-lysine biosynthesis via DAP pathway; (S)-tetrahydrodipicolinate from L-aspartate: step 4/4. In terms of biological role, catalyzes the conversion of 4-hydroxy-tetrahydrodipicolinate (HTPA) to tetrahydrodipicolinate. This Vibrio vulnificus (strain CMCP6) protein is 4-hydroxy-tetrahydrodipicolinate reductase.